Reading from the N-terminus, the 182-residue chain is CASP-like protein 5A1 (182 aa).

The Cytoplasmic portion of the chain corresponds to 1–47 (MEMASHPAVHPVALPPPYQAVGPPAPPAVRINDFPGSPGTLMGLALR). A helical transmembrane segment spans residues 48-68 (FAQLGFALTALCIMVSIVGFS). Residues 69-72 (SVTA) are Extracellular-facing. The chain crosses the membrane as a helical span at residues 73 to 93 (FCFLVAAMVLQCIWSLCLGVL). The Cytoplasmic portion of the chain corresponds to 94 to 117 (DCYALLTKRSLRNSLILSFFVVGD). A helical transmembrane segment spans residues 118 to 138 (WITSTMTFAGACAAAGITVLI). At 139–158 (DNDLNQCGPNHCNRFEAAAA) the chain is on the extracellular side. Residues 159–179 (MAFMSWVITTISFFLSFWILV) traverse the membrane as a helical segment. The Cytoplasmic portion of the chain corresponds to 180–182 (TCR).

This sequence belongs to the Casparian strip membrane proteins (CASP) family. As to quaternary structure, homodimer and heterodimers.

It is found in the cell membrane. This is CASP-like protein 5A1 from Physcomitrium patens (Spreading-leaved earth moss).